Here is a 232-residue protein sequence, read N- to C-terminus: Endonuclease NucS (232 aa).

The protein belongs to the NucS endonuclease family.

It is found in the cytoplasm. Cleaves both 3' and 5' ssDNA extremities of branched DNA structures. The protein is Endonuclease NucS of Mycobacteroides abscessus (strain ATCC 19977 / DSM 44196 / CCUG 20993 / CIP 104536 / JCM 13569 / NCTC 13031 / TMC 1543 / L948) (Mycobacterium abscessus).